We begin with the raw amino-acid sequence, 418 residues long: Glutamyl-tRNA reductase (418 aa).

Substrate is bound by residues 49 to 52 (TCNR), Ser109, 114 to 116 (EPQ), and Gln120. Cys50 serves as the catalytic Nucleophile. 189 to 194 (GAGETI) is an NADP(+) binding site.

Belongs to the glutamyl-tRNA reductase family. In terms of assembly, homodimer.

The catalysed reaction is (S)-4-amino-5-oxopentanoate + tRNA(Glu) + NADP(+) = L-glutamyl-tRNA(Glu) + NADPH + H(+). The protein operates within porphyrin-containing compound metabolism; protoporphyrin-IX biosynthesis; 5-aminolevulinate from L-glutamyl-tRNA(Glu): step 1/2. In terms of biological role, catalyzes the NADPH-dependent reduction of glutamyl-tRNA(Glu) to glutamate 1-semialdehyde (GSA). The protein is Glutamyl-tRNA reductase of Escherichia coli O1:K1 / APEC.